A 1068-amino-acid chain; its full sequence is Probable ATPase FE772_23070 (1068 aa).

ATP is bound at residue 217–224 (GGGGAGKT).

Functionally, involved in defense against bacteriophages. When this probable 4 gene operon (bGSDM-FE772_23060-FE772_23065-FE772_23070) is inserted into E.coli it provides nearly 100-fold protection against phages T5 and T6 and about 8-fold against phage T4. The operon without bGSDM no longer protects against phage. Probably a nucleotide hydrolase, possibly of ATP. The protein is Probable ATPase FE772_23070 of Lysobacter enzymogenes.